A 662-amino-acid polypeptide reads, in one-letter code: Methyl-accepting chemotaxis protein TlpB (662 aa).

Topologically, residues 1–16 (MGKFIQWIKQPSISKP) are cytoplasmic. A helical membrane pass occupies residues 17–37 (LIAAFLAVLILPVGVLAYFSY). The Extracellular portion of the chain corresponds to 38–281 (QSAWNALDRE…LQDASSPVLN (244 aa)). Residues 153–228 (SEPYTDEATG…KPGTTGSGDW (76 aa)) form the Cache domain. The helical transmembrane segment at 282 to 302 (TAVIILCVSIVIGGILILYII) threads the bilayer. Positions 303–355 (RAITKPLRKLVSTSAKISSGDLTEVIDIHSKNEFGQLGESFNEMSASLRSVIG) constitute an HAMP domain. At 303 to 662 (RAITKPLRKL…DITKKFKIES (360 aa)) the chain is on the cytoplasmic side. Glu370 is modified (glutamate methyl ester (Glu)). One can recognise a Methyl-accepting transducer domain in the interval 374–610 (SAAQTSKATE…EVSSAVEDIS (237 aa)). Gln594 is subject to Glutamate methyl ester (Gln). 2 positions are modified to glutamate methyl ester (Glu): Glu629 and Glu636.

The protein belongs to the methyl-accepting chemotaxis (MCP) protein family.

It is found in the cell membrane. In terms of biological role, chemotactic-signal transducers respond to changes in the concentration of attractants and repellents in the environment, transduce a signal from the outside to the inside of the cell, and facilitate sensory adaptation through the variation of the level of methylation. All amino acids serve as attractants in B.subtilis, they appear to cause an increase in the turnover methyl groups, leading to methylation of an unidentified acceptor, while repellents have been shown to cause a decrease in methyl group turnover. The methyl groups are added by a methyltransferase and removed by a methylesterase. This is Methyl-accepting chemotaxis protein TlpB (tlpB) from Bacillus subtilis (strain 168).